A 91-amino-acid chain; its full sequence is Small ribosomal subunit protein bS16 (91 aa).

This sequence belongs to the bacterial ribosomal protein bS16 family.

In Levilactobacillus brevis (strain ATCC 367 / BCRC 12310 / CIP 105137 / JCM 1170 / LMG 11437 / NCIMB 947 / NCTC 947) (Lactobacillus brevis), this protein is Small ribosomal subunit protein bS16.